A 95-amino-acid chain; its full sequence is Acylphosphatase (95 aa).

One can recognise an Acylphosphatase-like domain in the interval 10–95 (CIHATVSGKV…VEDYSDFRVR (86 aa)). Active-site residues include Arg-25 and Asn-43.

Belongs to the acylphosphatase family.

The enzyme catalyses an acyl phosphate + H2O = a carboxylate + phosphate + H(+). The chain is Acylphosphatase (acyP) from Coxiella burnetii (strain Dugway 5J108-111).